Here is a 409-residue protein sequence, read N- to C-terminus: Putative competence-damage inducible protein (409 aa).

This sequence belongs to the CinA family.

The sequence is that of Putative competence-damage inducible protein from Clostridium botulinum (strain Kyoto / Type A2).